The primary structure comprises 291 residues: Nucleotide-binding protein CMM_1747 (291 aa).

Residue 15 to 22 coordinates ATP; sequence GMSGAGRS. Position 66-69 (66-69) interacts with GTP; sequence DVRG.

The protein belongs to the RapZ-like family.

In terms of biological role, displays ATPase and GTPase activities. The polypeptide is Nucleotide-binding protein CMM_1747 (Clavibacter michiganensis subsp. michiganensis (strain NCPPB 382)).